Reading from the N-terminus, the 171-residue chain is MSVSFRDRVLKLYLLGFDPSEIAQTLSLDVKRKVTEEEVLHVLAEARELLSALPSLEDIRAEVGQALERARIFQKDLLAIYQNMLRNYNAMMEGLTEHPDGTPVIGVRPADIAAMADRIMKIDQERITALLNSLKVLGHVGSTTAGALPSATELVSVEELVAEVVDEAPKT.

The protein belongs to the P23virus small terminase family. In terms of assembly, homononamer; forms a ring-like structure through which genomic DNA is translocated into the capsid. Heterodimer with the terminase large subunit; the active complex is probably heterooligomeric.

The terminase small subunit binds to the packaging initiation site and regulates the ATPase activity of the terminase large subunit. The terminase lies at a unique vertex of the procapsid and is composed of two subunits, a small terminase subunit involved in viral DNA recognition (packaging sequence), and a large terminase subunit. Both terminase subunits heterooligomerize and are docked on the portal protein to form the packaging machine. In Thermus phage G20c (Thermus thermophilus phage G20c), this protein is Terminase, small subunit.